The primary structure comprises 478 residues: Probable sodium/glutamine symporter GlnT (478 aa).

10 helical membrane passes run 14–34 (DLLW…YFTF), 85–105 (IAIA…IIAI), 145–165 (WMGA…FNSV), 185–205 (LGLI…KRIA), 211–231 (IVVV…FSNI), 236–256 (GVLA…GGAL), 298–318 (AFGV…IILF), 342–362 (GSWA…CALI), 381–401 (LIFV…VAKV), and 411–431 (FMGL…KVVF).

It belongs to the alanine or glycine:cation symporter (AGCS) (TC 2.A.25) family.

The protein localises to the cell membrane. Its function is as follows. Probably functions as a sodium/glutamine symporter for glutamine uptake. The polypeptide is Probable sodium/glutamine symporter GlnT (glnT) (Bacillus subtilis (strain 168)).